We begin with the raw amino-acid sequence, 378 residues long: Cytochrome b (378 aa).

4 consecutive transmembrane segments (helical) span residues 34–54, 78–99, 114–134, and 179–199; these read FGSL…FLAM, WLLR…YLHV, WLIG…GYVL, and FFTF…IHLL. Heme b-binding residues include His-84 and His-98. Residues His-183 and His-197 each contribute to the heme b site. Residue His-202 participates in a ubiquinone binding. The next 4 membrane-spanning stretches (helical) occupy residues 227-247, 289-309, 321-341, and 348-368; these read FKDI…VLIS, LGGV…PFYN, INQV…WIGA, and YVLI…VNPL.

It belongs to the cytochrome b family. The main subunits of complex b-c1 are: cytochrome b, cytochrome c1 and the Rieske protein. It depends on heme b as a cofactor.

Its subcellular location is the mitochondrion inner membrane. Its function is as follows. Component of the ubiquinol-cytochrome c reductase complex (complex III or cytochrome b-c1 complex) that is part of the mitochondrial respiratory chain. The b-c1 complex mediates electron transfer from ubiquinol to cytochrome c. Contributes to the generation of a proton gradient across the mitochondrial membrane that is then used for ATP synthesis. The sequence is that of Cytochrome b (mt:Cyt-b) from Drosophila melanogaster (Fruit fly).